Consider the following 391-residue polypeptide: RNA-binding motif protein, X chromosome (391 aa).

Met1 carries the post-translational modification N-acetylmethionine; in Heterogeneous nuclear ribonucleoprotein G; alternate. Val2 carries the N-acetylvaline; in Heterogeneous nuclear ribonucleoprotein G, N-terminally processed modification. The region spanning 8–86 (GKLFIGGLNT…KAIKVEQATK (79 aa)) is the RRM domain. Lys22 participates in a covalent cross-link: Glycyl lysine isopeptide (Lys-Gly) (interchain with G-Cter in SUMO2). Residue Lys30 is modified to N6-acetyllysine. Positions 61-80 (DAKDAARDMNGKSLDGKAIK) are enriched in basic and acidic residues. The disordered stretch occupies residues 61–391 (DAKDAARDMN…SDRGGGRSRY (331 aa)). Residues Lys80 and Lys86 each participate in a glycyl lysine isopeptide (Lys-Gly) (interchain with G-Cter in SUMO2) cross-link. Phosphoserine is present on residues Ser88 and Ser91. A compositionally biased stretch (gly residues) spans 109–120 (LRGGRGGSGGTR). 3 positions are modified to omega-N-methylarginine: Arg125, Arg144, and Arg164. Residues 151-164 (RGPPPRSGGPPPKR) are compositionally biased toward pro residues. Residue Ser165 is modified to Phosphoserine. Arg172 is subject to Omega-N-methylarginine. Ser174 carries the phosphoserine modification. A necessary for the association to nascent RNAPII transcripts and nuclear localization region spans residues 186–236 (GRDSYGGPPRREPLPSRRDVYLSPRDDGYSTKDSYSSRDYPSSRDTRDYAP). 2 stretches are compositionally biased toward basic and acidic residues: residues 194-215 (PRRE…DGYS) and 241-274 (YTYR…DYSD). Residues Ser261, Ser328, Ser329, Ser330, and Ser332 each carry the phosphoserine modification. Low complexity predominate over residues 323-337 (SRDSYSSSRSDLYSS). Residues 333 to 391 (DLYSSGRDRVGRQERGLPPSMERGYPPPRDSYSSSSRGAPRGGGRGGSRSDRGGGRSRY) are necessary for RNA-binding. Residues 338–347 (GRDRVGRQER) show a composition bias toward basic and acidic residues. At Ser352 the chain carries Phosphoserine. Residues 362–371 (DSYSSSSRGA) are compositionally biased toward low complexity. The span at 380-391 (SRSDRGGGRSRY) shows a compositional bias: basic and acidic residues.

Homomultimer. Found in the supraspliceosome complex. Identified in the spliceosome C complex. Forms a complex with ILF2, ILF3, YLPM1, KHDRBS1, NCOA5 and PPP1CA. Interacts with CLK2, KHDRBS2, KHDRBS3, SAFB/SAFB1, TRA2B and YTHDC1. Interacts with ERAP1; the interaction is RNA-independent. Interacts with PPIA/CYPA. Post-translationally, O-glycosylated. In terms of processing, arg-185 is dimethylated, probably to asymmetric dimethylarginine.

The protein localises to the nucleus. RNA-binding protein that plays several role in the regulation of pre- and post-transcriptional processes. Implicated in tissue-specific regulation of gene transcription and alternative splicing of several pre-mRNAs. Binds to and stimulates transcription from the tumor suppressor TXNIP gene promoter; may thus be involved in tumor suppression. When associated with SAFB, binds to and stimulates transcription from the SREBF1 promoter. Associates with nascent mRNAs transcribed by RNA polymerase II. Component of the supraspliceosome complex that regulates pre-mRNA alternative splice site selection. Can either activate or suppress exon inclusion; acts additively with TRA2B to promote exon 7 inclusion of the survival motor neuron SMN2. Represses the splicing of MAPT/Tau exon 10. Binds preferentially to single-stranded 5'-CC[A/C]-rich RNA sequence motifs localized in a single-stranded conformation; probably binds RNA as a homodimer. Binds non-specifically to pre-mRNAs. Also plays a role in the cytoplasmic TNFR1 trafficking pathways; promotes both the IL-1-beta-mediated inducible proteolytic cleavage of TNFR1 ectodomains and the release of TNFR1 exosome-like vesicles to the extracellular compartment. This Pan troglodytes (Chimpanzee) protein is RNA-binding motif protein, X chromosome (RBMX).